A 323-amino-acid polypeptide reads, in one-letter code: Dehydrogenase/reductase SDR family member 7B (323 aa).

At 1–17 (MISPSFRKGMLKERVMD) the chain is on the cytoplasmic side. The helical; Signal-anchor for type II membrane protein transmembrane segment at 18-38 (LASQTTILPLLFGCLGIFSLF) threads the bilayer. Residues 39–323 (RLLQRIRSKA…ARKERKSKSS (285 aa)) are Lumenal-facing. NAD(+)-binding residues include Ser-62 and Leu-64. Residue Ser-192 participates in substrate binding. Tyr-205, Lys-209, and Thr-240 together coordinate NAD(+). Residue Tyr-205 is the Proton acceptor of the active site.

The protein belongs to the short-chain dehydrogenases/reductases (SDR) family.

Its subcellular location is the endoplasmic reticulum membrane. Putative oxidoreductase. This chain is Dehydrogenase/reductase SDR family member 7B, found in Mus musculus (Mouse).